We begin with the raw amino-acid sequence, 357 residues long: UDP-N-acetylglucosamine--N-acetylmuramyl-(pentapeptide) pyrophosphoryl-undecaprenol N-acetylglucosamine transferase (357 aa).

UDP-N-acetyl-alpha-D-glucosamine is bound by residues 13-15 (TGG), asparagine 122, arginine 163, serine 191, and glutamine 288.

This sequence belongs to the glycosyltransferase 28 family. MurG subfamily.

The protein resides in the cell inner membrane. It catalyses the reaction di-trans,octa-cis-undecaprenyl diphospho-N-acetyl-alpha-D-muramoyl-L-alanyl-D-glutamyl-meso-2,6-diaminopimeloyl-D-alanyl-D-alanine + UDP-N-acetyl-alpha-D-glucosamine = di-trans,octa-cis-undecaprenyl diphospho-[N-acetyl-alpha-D-glucosaminyl-(1-&gt;4)]-N-acetyl-alpha-D-muramoyl-L-alanyl-D-glutamyl-meso-2,6-diaminopimeloyl-D-alanyl-D-alanine + UDP + H(+). The protein operates within cell wall biogenesis; peptidoglycan biosynthesis. Its function is as follows. Cell wall formation. Catalyzes the transfer of a GlcNAc subunit on undecaprenyl-pyrophosphoryl-MurNAc-pentapeptide (lipid intermediate I) to form undecaprenyl-pyrophosphoryl-MurNAc-(pentapeptide)GlcNAc (lipid intermediate II). This is UDP-N-acetylglucosamine--N-acetylmuramyl-(pentapeptide) pyrophosphoryl-undecaprenol N-acetylglucosamine transferase from Gloeobacter violaceus (strain ATCC 29082 / PCC 7421).